Here is an 85-residue protein sequence, read N- to C-terminus: Putative membrane protein insertion efficiency factor (85 aa).

The interval 62-85 (KGGFDPVPLKKDKSASKHSHKHNH) is disordered.

The protein belongs to the UPF0161 family.

It is found in the cell membrane. Could be involved in insertion of integral membrane proteins into the membrane. The chain is Putative membrane protein insertion efficiency factor from Staphylococcus aureus (strain Mu3 / ATCC 700698).